A 62-amino-acid polypeptide reads, in one-letter code: Ferredoxin-1 (62 aa).

4Fe-4S ferredoxin-type domains follow at residues 2 to 28 (ALYI…SAGS) and 29 to 62 (EIYV…IVQG). [4Fe-4S] cluster-binding residues include C9, C12, C15, C19, C38, C41, C50, and C54.

Requires [4Fe-4S] cluster as cofactor.

In terms of biological role, ferredoxins are iron-sulfur proteins that transfer electrons in a wide variety of metabolic reactions. This chain is Ferredoxin-1, found in Chlorobaculum tepidum (strain ATCC 49652 / DSM 12025 / NBRC 103806 / TLS) (Chlorobium tepidum).